Consider the following 343-residue polypeptide: NADH-ubiquinone oxidoreductase chain 2 (343 aa).

The next 8 helical transmembrane spans lie at 1 to 21 (MNPM…TMIT), 59 to 81 (YYLI…ALNT), 96 to 116 (TIIT…SWLP), 150 to 170 (NITL…LGSL), 178 to 198 (LMAF…TMAP), 200 to 220 (ISTL…LLIN), 241 to 261 (MTIL…SGFM), and 270 to 290 (LISM…LLSL).

The protein belongs to the complex I subunit 2 family.

It is found in the mitochondrion inner membrane. The catalysed reaction is a ubiquinone + NADH + 5 H(+)(in) = a ubiquinol + NAD(+) + 4 H(+)(out). Functionally, core subunit of the mitochondrial membrane respiratory chain NADH dehydrogenase (Complex I) that is believed to belong to the minimal assembly required for catalysis. Complex I functions in the transfer of electrons from NADH to the respiratory chain. The immediate electron acceptor for the enzyme is believed to be ubiquinone. This chain is NADH-ubiquinone oxidoreductase chain 2 (MT-ND2), found in Lycodon semicarinatus (Ryukyu odd-tooth snake).